The primary structure comprises 675 residues: UvrABC system protein B (675 aa).

A Helicase ATP-binding domain is found at Glu32–Val417. An ATP-binding site is contributed by Gly45 to Thr52. The Beta-hairpin signature appears at Tyr98–Ile121. One can recognise a Helicase C-terminal domain in the interval Gln436–Ile602. In terms of domain architecture, UVR spans Ile634–Asn669.

The protein belongs to the UvrB family. Forms a heterotetramer with UvrA during the search for lesions. Interacts with UvrC in an incision complex.

The protein localises to the cytoplasm. In terms of biological role, the UvrABC repair system catalyzes the recognition and processing of DNA lesions. A damage recognition complex composed of 2 UvrA and 2 UvrB subunits scans DNA for abnormalities. Upon binding of the UvrA(2)B(2) complex to a putative damaged site, the DNA wraps around one UvrB monomer. DNA wrap is dependent on ATP binding by UvrB and probably causes local melting of the DNA helix, facilitating insertion of UvrB beta-hairpin between the DNA strands. Then UvrB probes one DNA strand for the presence of a lesion. If a lesion is found the UvrA subunits dissociate and the UvrB-DNA preincision complex is formed. This complex is subsequently bound by UvrC and the second UvrB is released. If no lesion is found, the DNA wraps around the other UvrB subunit that will check the other stand for damage. This is UvrABC system protein B from Neisseria meningitidis serogroup A / serotype 4A (strain DSM 15465 / Z2491).